The primary structure comprises 233 residues: 2,3-bisphosphoglycerate-dependent phosphoglycerate mutase (233 aa).

Residues 8 to 15 (RHGQSLWN), 21 to 22 (TG), Arg60, 116 to 119 (ERYY), Lys127, 143 to 144 (RR), and 187 to 188 (GN) contribute to the substrate site. The active-site Tele-phosphohistidine intermediate is the His9. Glu116 (proton donor/acceptor) is an active-site residue.

Belongs to the phosphoglycerate mutase family. BPG-dependent PGAM subfamily.

The catalysed reaction is (2R)-2-phosphoglycerate = (2R)-3-phosphoglycerate. It participates in carbohydrate degradation; glycolysis; pyruvate from D-glyceraldehyde 3-phosphate: step 3/5. In terms of biological role, catalyzes the interconversion of 2-phosphoglycerate and 3-phosphoglycerate. In Gloeothece citriformis (strain PCC 7424) (Cyanothece sp. (strain PCC 7424)), this protein is 2,3-bisphosphoglycerate-dependent phosphoglycerate mutase.